Here is a 159-residue protein sequence, read N- to C-terminus: Ribonuclease H (159 aa).

Residues 4-145 (THKQVNIYTD…CDKLARDAAE (142 aa)) enclose the RNase H type-1 domain. Residues D13, E51, D73, and D137 each coordinate Mg(2+).

It belongs to the RNase H family. In terms of assembly, monomer. The cofactor is Mg(2+).

The protein localises to the cytoplasm. It catalyses the reaction Endonucleolytic cleavage to 5'-phosphomonoester.. Endonuclease that specifically degrades the RNA of RNA-DNA hybrids. The chain is Ribonuclease H from Shewanella denitrificans (strain OS217 / ATCC BAA-1090 / DSM 15013).